Consider the following 333-residue polypeptide: Photosystem II assembly lipoprotein Ycf48 (333 aa).

A signal peptide spans 1-23 (MTRFVSSAINLLLVLVLGVSLSG). Cysteine 24 carries the N-palmitoyl cysteine lipid modification. Cysteine 24 carries the S-diacylglycerol cysteine lipid modification.

This sequence belongs to the Ycf48 family. Part of early PSII assembly complexes which includes D1 (psbA) and PsbI; not found in mature PSII. Binds to the lumenal side of PSII complexes. Interacts with YidC.

The protein resides in the cellular thylakoid membrane. Functionally, a factor required for optimal assembly of photosystem II (PSII), acting in the early stages of PSII assembly. Also plays a role in replacement of photodamaged D1 (psbA). Assists YidC in synthesis of chlorophyll-binding proteins. This Parasynechococcus marenigrum (strain WH8102) protein is Photosystem II assembly lipoprotein Ycf48.